The primary structure comprises 107 residues: U1-lycotoxin-Ls1s (107 aa).

An N-terminal signal peptide occupies residues 1 to 20 (MMKVLVVVALLVTLISYSSS). A propeptide spanning residues 21-41 (EGIDDLEADELLSLMANEQTR) is cleaved from the precursor. Intrachain disulfides connect Cys-44-Cys-59, Cys-51-Cys-68, Cys-58-Cys-86, and Cys-70-Cys-84.

It belongs to the neurotoxin 19 (CSTX) family. 04 (U1-Lctx) subfamily. Expressed by the venom gland.

Its subcellular location is the secreted. In Lycosa singoriensis (Wolf spider), this protein is U1-lycotoxin-Ls1s.